Reading from the N-terminus, the 208-residue chain is Uracil phosphoribosyltransferase (208 aa).

Residues Arg-78, Arg-103, and 130-138 (DPMLATGGS) each bind 5-phospho-alpha-D-ribose 1-diphosphate. Residues Ile-193 and 198-200 (GDA) each bind uracil. Residue Asp-199 participates in 5-phospho-alpha-D-ribose 1-diphosphate binding.

It belongs to the UPRTase family. Requires Mg(2+) as cofactor.

It carries out the reaction UMP + diphosphate = 5-phospho-alpha-D-ribose 1-diphosphate + uracil. The protein operates within pyrimidine metabolism; UMP biosynthesis via salvage pathway; UMP from uracil: step 1/1. With respect to regulation, allosterically activated by GTP. In terms of biological role, catalyzes the conversion of uracil and 5-phospho-alpha-D-ribose 1-diphosphate (PRPP) to UMP and diphosphate. This chain is Uracil phosphoribosyltransferase, found in Glaesserella parasuis serovar 5 (strain SH0165) (Haemophilus parasuis).